The following is a 217-amino-acid chain: Zinc finger CCHC-type and RNA-binding motif-containing protein 1 (217 aa).

In terms of domain architecture, RRM spans 10-88 (STVYVSNLPF…RVIKASIAID (79 aa)). A CCHC-type zinc finger spans residues 105 to 122 (SKCYECGESGHLSYACPK). The interval 120 to 217 (CPKNMLGERE…YFSDEEELSD (98 aa)) is disordered. Acidic residues predominate over residues 145 to 163 (PEEEIEEVEESEDEGEDPA). Phosphoserine occurs at positions 155, 210, and 216.

Component of the U11/U12 snRNPs that are part of the U12-type spliceosome. Interacts with ZRSR1.

It is found in the nucleus. It localises to the nucleoplasm. This is Zinc finger CCHC-type and RNA-binding motif-containing protein 1 (ZCRB1) from Bos taurus (Bovine).